The following is a 277-amino-acid chain: Large ribosomal subunit protein uL2c (277 aa).

Disordered stretches follow at residues N36 to G56 and M225 to S259.

The protein belongs to the universal ribosomal protein uL2 family. As to quaternary structure, part of the 50S ribosomal subunit.

It is found in the plastid. Its subcellular location is the chloroplast. This chain is Large ribosomal subunit protein uL2c (rpl2), found in Psilotum nudum (Whisk fern).